A 211-amino-acid polypeptide reads, in one-letter code: Ferritin heavy chain (211 aa).

An N-terminal signal peptide occupies residues 1-20; the sequence is MNSILLVFAGILAVCLPASA. One can recognise a Ferritin-like diiron domain in the interval 35–191; sequence ITMHRSCRNS…GKASTLKKLM (157 aa). Cys41 and Cys150 are disulfide-bonded. Fe cation is bound by residues Glu52, Glu87, His90, Glu136, and Gln173.

Belongs to the ferritin family. Oligomer of 12 light (L) chains and 12 heavy (H) chains; L and H chains are disulfide-linked. The functional molecule forms a roughly spherical shell with a diameter of 12 nm and contains a central cavity into which the insoluble ferric iron core is deposited.

The protein localises to the golgi apparatus. Its subcellular location is the secreted. It catalyses the reaction 4 Fe(2+) + O2 + 4 H(+) = 4 Fe(3+) + 2 H2O. Its function is as follows. Stores iron in a soluble, non-toxic, readily available form. Important for iron homeostasis. Iron is taken up in the ferrous form and deposited as ferric hydroxides after oxidation. Ferritin is composed of a heavy (H) chain which is responsible for the oxidation and uptake of ferrous iron, and a light (L) chain which facilitates the nucleation of the ferrihydrite iron core. This chain is Ferritin heavy chain, found in Trichoplusia ni (Cabbage looper).